We begin with the raw amino-acid sequence, 424 residues long: Geranylgeranyl pyrophosphate synthase D (424 aa).

The disordered stretch occupies residues 42–73 (PSATWPSVPKVHKRNRSTSLSDQQTAKKAHAN). The segment covering 58–67 (STSLSDQQTA) has biased composition (polar residues). The isopentenyl diphosphate site is built by lysine 147, arginine 150, and histidine 179. Mg(2+)-binding residues include aspartate 186 and aspartate 190. Arginine 195 is a binding site for dimethylallyl diphosphate. Arginine 196 serves as a coordination point for isopentenyl diphosphate. Dimethylallyl diphosphate-binding residues include lysine 274, threonine 275, glutamine 311, lysine 328, and lysine 338.

Belongs to the FPP/GGPP synthase family. Mg(2+) serves as cofactor.

It localises to the cytoplasm. It catalyses the reaction isopentenyl diphosphate + dimethylallyl diphosphate = (2E)-geranyl diphosphate + diphosphate. The enzyme catalyses isopentenyl diphosphate + (2E)-geranyl diphosphate = (2E,6E)-farnesyl diphosphate + diphosphate. It carries out the reaction isopentenyl diphosphate + (2E,6E)-farnesyl diphosphate = (2E,6E,10E)-geranylgeranyl diphosphate + diphosphate. It participates in isoprenoid biosynthesis; farnesyl diphosphate biosynthesis; farnesyl diphosphate from geranyl diphosphate and isopentenyl diphosphate: step 1/1. It functions in the pathway isoprenoid biosynthesis; geranyl diphosphate biosynthesis; geranyl diphosphate from dimethylallyl diphosphate and isopentenyl diphosphate: step 1/1. Its pathway is isoprenoid biosynthesis; geranylgeranyl diphosphate biosynthesis; geranylgeranyl diphosphate from farnesyl diphosphate and isopentenyl diphosphate: step 1/1. Catalyzes the trans-addition of the 3 molecules of isopentenyl diphosphate (IPP) onto dimethylallyl diphosphate (DMAPP) to form geranylgeranyl pyrophosphate (GGDP). The protein is Geranylgeranyl pyrophosphate synthase D (GGS-D) of Phomopsis amygdali (Fusicoccum amygdali).